The following is a 147-amino-acid chain: Large ribosomal subunit protein uL15 (147 aa).

The tract at residues 1 to 62 (MDLNTLKPAL…GQMPLQRRLP (62 aa)) is disordered. The span at 30-39 (TATKGHKGQK) shows a compositional bias: basic residues.

Belongs to the universal ribosomal protein uL15 family. Part of the 50S ribosomal subunit.

Binds to the 23S rRNA. This Pelobacter propionicus (strain DSM 2379 / NBRC 103807 / OttBd1) protein is Large ribosomal subunit protein uL15.